Consider the following 326-residue polypeptide: L-lactate dehydrogenase (326 aa).

Residues Val20, Asp41, Lys46, Tyr71, and 85–86 (GA) contribute to the NAD(+) site. Substrate contacts are provided by Gln88 and Arg94. NAD(+)-binding positions include Ser107, 124 to 126 (AAN), and Ser149. Residue 126-129 (NPVD) participates in substrate binding. 154-157 (DTAR) contributes to the substrate binding site. Beta-D-fructose 1,6-bisphosphate-binding positions include Arg159, 171-174 (RSVH), and His174. His181 acts as the Proton acceptor in catalysis. At Tyr226 the chain carries Phosphotyrosine. Thr235 is a binding site for substrate.

The protein belongs to the LDH/MDH superfamily. LDH family. As to quaternary structure, homotetramer.

Its subcellular location is the cytoplasm. It carries out the reaction (S)-lactate + NAD(+) = pyruvate + NADH + H(+). Its pathway is fermentation; pyruvate fermentation to lactate; (S)-lactate from pyruvate: step 1/1. Its activity is regulated as follows. Allosterically activated by fructose 1,6-bisphosphate (FBP) alone under acidic conditions, while it requires additional activation factors such as divalent cations (Mn(2+)) under neutral conditions. Under acidic conditions, Mn(2+) is an inhibitor in the absence of fructose 1,6-bisphosphate (FBP). In case of L.casei, L-LDH binds four fructose 1,6-bisphosphate (FBP) molecules per tetramer, while usual allosteric L-LDH binds only two fructose 1,6-bisphosphate (FBP) molecules per tetramer. Functionally, catalyzes the conversion of lactate to pyruvate. The polypeptide is L-lactate dehydrogenase (Lacticaseibacillus casei (Lactobacillus casei)).